The primary structure comprises 87 residues: Small ribosomal subunit protein uS17 (87 aa).

It belongs to the universal ribosomal protein uS17 family. In terms of assembly, part of the 30S ribosomal subunit.

One of the primary rRNA binding proteins, it binds specifically to the 5'-end of 16S ribosomal RNA. In Geobacillus stearothermophilus (Bacillus stearothermophilus), this protein is Small ribosomal subunit protein uS17.